A 339-amino-acid polypeptide reads, in one-letter code: Glycerol-3-phosphate dehydrogenase [NAD(P)+] (339 aa).

NADPH-binding residues include S15, Y16, H36, and K110. Residues K110, G139, and T141 each coordinate sn-glycerol 3-phosphate. A143 provides a ligand contact to NADPH. Residues K195, D248, S258, R259, and N260 each coordinate sn-glycerol 3-phosphate. The Proton acceptor role is filled by K195. NADPH is bound at residue R259. Residues V283 and E285 each coordinate NADPH.

Belongs to the NAD-dependent glycerol-3-phosphate dehydrogenase family.

It localises to the cytoplasm. It carries out the reaction sn-glycerol 3-phosphate + NAD(+) = dihydroxyacetone phosphate + NADH + H(+). The enzyme catalyses sn-glycerol 3-phosphate + NADP(+) = dihydroxyacetone phosphate + NADPH + H(+). It functions in the pathway membrane lipid metabolism; glycerophospholipid metabolism. Catalyzes the reduction of the glycolytic intermediate dihydroxyacetone phosphate (DHAP) to sn-glycerol 3-phosphate (G3P), the key precursor for phospholipid synthesis. The polypeptide is Glycerol-3-phosphate dehydrogenase [NAD(P)+] (Pectobacterium carotovorum subsp. carotovorum (strain PC1)).